A 572-amino-acid polypeptide reads, in one-letter code: Transcription factor E3 (572 aa).

Position 47 is a phosphoserine; by MTOR (Ser47). Over residues 87 to 125 (TTPATLSASSSAGGSRTPAMSSSSSRVLLRQQLMRAQAQ) the composition is skewed to low complexity. A disordered region spans residues 87–152 (TTPATLSASS…SPAPASPAIS (66 aa)). Over residues 126–135 (EQERRERREQ) the composition is skewed to basic and acidic residues. Residue Arg187 is modified to Asymmetric dimethylarginine. The segment at 210 to 248 (LASQALTPPPGPSSAQPLPAPETAHATGPTGSAPNSPMA) is disordered. Residues 259–270 (EIDDVIDEIISL) are strong transcription activation domain. At Ser320 the chain carries Phosphoserine; by MTOR. Lys338 participates in a covalent cross-link: Glycyl lysine isopeptide (Lys-Gly) (interchain with G-Cter in SUMO2). The region spanning 345–398 (QKKDNHNLIERRRRFNINDRIKELGTLIPKSNDPEMRWNKGTILKASVDYIRKL) is the bHLH domain. Residues 355–358 (RRRR) carry the Nuclear localization signal motif. Residues 408-429 (LESRQRSLEQANRSLQLRIQEL) are leucine-zipper. Disordered regions lie at residues 439-495 (PVPP…APPS) and 530-572 (VGGL…EEES). Over residues 446 to 457 (LLSLTTSSVSDS) the composition is skewed to low complexity. Residues Ser539, Ser545, Ser551, Ser553, Ser557, and Ser565 each carry the phosphoserine modification. Residues 543-572 (AASDPLLSSVSPAVSKASSRRSSFSMEEES) are compositionally biased toward low complexity.

Belongs to the MiT/TFE family. As to quaternary structure, homodimer and heterodimer; with TFEB or MITF. Interacts with RRAGC/RagC GDP-bound and RRAGD/RagD GDP-bound; promoting its recruitment to lysosomal membrane in the presence of nutrients. Interacts with TSC22D1; the interaction is enhanced in the presence of TGF-beta. Sumoylated; does not affect dimerization with MITF. In terms of processing, phosphorylation ar Ser-47 and Ser-320 by MTOR via non-canonical mTORC1 pathway regulates its stability and subcellular location, respectively. When nutrients are present, phosphorylation by MTOR at Ser-47 promotes ubiquitination by the SCF(BTRC) complex, followed by degradation. When nutrients are present, phosphorylation by MTOR at Ser-320 also promotes association with 14-3-3/YWHA adapters and retention in the cytosol. Phosphorylation at Ser-47 plays a more critical role than phosphorylation at Ser-320 for TFE3 inactivation. Inhibition of mTORC1, starvation and lysosomal disruption, promotes dephosphorylation and transcription factor activity. Post-translationally, ubiquitinated by the SCF(BTRC) and SCF(FBXW11) complexes following phosphorylation at Ser-47 by MTOR, leading to its degradation by the proteasome. In terms of tissue distribution, widely expressed.

It is found in the cytoplasm. The protein resides in the cytosol. The protein localises to the nucleus. Its subcellular location is the lysosome membrane. Functionally, transcription factor that acts as a master regulator of lysosomal biogenesis and immune response. Specifically recognizes and binds E-box sequences (5'-CANNTG-3'); efficient DNA-binding requires dimerization with itself or with another MiT/TFE family member such as TFEB or MITF. Involved in the cellular response to amino acid availability by acting downstream of MTOR: in the presence of nutrients, TFE3 phosphorylation by MTOR promotes its inactivation. Upon starvation or lysosomal stress, inhibition of MTOR induces TFE3 dephosphorylation, resulting in transcription factor activity. Specifically recognizes and binds the CLEAR-box sequence (5'-GTCACGTGAC-3') present in the regulatory region of many lysosomal genes, leading to activate their expression, thereby playing a central role in expression of lysosomal genes. Maintains the pluripotent state of embryonic stem cells by promoting the expression of genes such as ESRRB; mTOR-dependent TFE3 cytosolic retention and inactivation promotes exit from pluripotency. Required to maintain the naive pluripotent state of hematopoietic stem cell; mTOR-dependent cytoplasmic retention of TFE3 promotes the exit of hematopoietic stem cell from pluripotency. TFE3 activity is also involved in the inhibition of neuronal progenitor differentiation. Acts as a positive regulator of browning of adipose tissue by promoting expression of target genes; mTOR-dependent phosphorylation promotes cytoplasmic retention of TFE3 and inhibits browning of adipose tissue. In association with TFEB, activates the expression of CD40L in T-cells, thereby playing a role in T-cell-dependent antibody responses in activated CD4(+) T-cells and thymus-dependent humoral immunity. Specifically recognizes the MUE3 box, a subset of E-boxes, present in the immunoglobulin enhancer. It also binds very well to a USF/MLTF site. Promotes TGF-beta-induced transcription of COL1A2; via its interaction with TSC22D1 at E-boxes in the gene proximal promoter. May regulate lysosomal positioning in response to nutrient deprivation by promoting the expression of PIP4P1. This is Transcription factor E3 from Mus musculus (Mouse).